The chain runs to 211 residues: Outer surface protein C (211 aa).

A signal peptide spans 1–18; it reads MKKNTLSAILMTLFLFIS. Cysteine 19 is lipidated: N-palmitoyl cysteine. Residue cysteine 19 is the site of S-diacylglycerol cysteine attachment.

Belongs to the OspC lipoprotein family. In terms of assembly, homodimer. Interacts with tick I.ricinus salivary protein Iric-1, Iric-2 and Iric-3. Binds human (host) plasminogen.

Its subcellular location is the cell outer membrane. It localises to the cell surface. Functionally, major immunodominant protein in mammalian hosts. Required for initial stages of mammalian infection. Inhibits macrophage-mediated phagocytosis of the bacteria. Binds human plasminogen; this probably confers an extracellular protease activity on the bacteria that allows it to traverse tissue. Interaction with tick I.ricinus salivary protein Salp15 protects the bacteria from antibody-mediated killing in vitro and in vivo. This Borreliella burgdorferi (Lyme disease spirochete) protein is Outer surface protein C.